The primary structure comprises 65 residues: Large ribosomal subunit protein bL35 (65 aa).

It belongs to the bacterial ribosomal protein bL35 family.

This is Large ribosomal subunit protein bL35 from Buchnera aphidicola subsp. Acyrthosiphon pisum (strain 5A).